The chain runs to 243 residues: Chromosome partition protein MukE (243 aa).

Positions Leu223 to Glu243 are disordered. Residues Glu233–Glu243 are compositionally biased toward acidic residues.

This sequence belongs to the MukE family. In terms of assembly, interacts, and probably forms a ternary complex, with MukF and MukB. The complex formation is stimulated by calcium or magnesium.

The protein resides in the cytoplasm. It is found in the nucleoid. Involved in chromosome condensation, segregation and cell cycle progression. May participate in facilitating chromosome segregation by condensation DNA from both sides of a centrally located replisome during cell division. Probably acts via its interaction with MukB and MukF. In Haemophilus influenzae (strain ATCC 51907 / DSM 11121 / KW20 / Rd), this protein is Chromosome partition protein MukE.